We begin with the raw amino-acid sequence, 86 residues long: Small ribosomal subunit protein bS20 (86 aa).

Residues M1–M27 are compositionally biased toward basic residues. Residues M1–M28 form a disordered region.

It belongs to the bacterial ribosomal protein bS20 family.

Functionally, binds directly to 16S ribosomal RNA. This is Small ribosomal subunit protein bS20 from Aliivibrio salmonicida (strain LFI1238) (Vibrio salmonicida (strain LFI1238)).